A 132-amino-acid polypeptide reads, in one-letter code: Small ribosomal subunit protein uS8 (132 aa).

Belongs to the universal ribosomal protein uS8 family. As to quaternary structure, part of the 30S ribosomal subunit. Contacts proteins S5 and S12.

One of the primary rRNA binding proteins, it binds directly to 16S rRNA central domain where it helps coordinate assembly of the platform of the 30S subunit. In Brucella melitensis biotype 1 (strain ATCC 23456 / CCUG 17765 / NCTC 10094 / 16M), this protein is Small ribosomal subunit protein uS8.